A 526-amino-acid polypeptide reads, in one-letter code: Keratin, type I cytoskeletal 10 (526 aa).

The segment covering 1 to 15 has biased composition (low complexity); that stretch reads MSVRYSSSKQYSSSR. Positions 1 to 29 are disordered; the sequence is MSVRYSSSKQYSSSRSGGGGGGGSSLRIS. The tract at residues 1–126 is head; that stretch reads MSVRYSSSKQ…FGDGGLISGN (126 aa). Serine 14, serine 16, serine 34, serine 45, serine 48, and serine 151 each carry phosphoserine. Residues 127–162 are coil 1A; it reads QKITMQNLNDRLASYLDKVRALEESNYELEVKIKEW. Residues 127-441 enclose the IF rod domain; the sequence is QKITMQNLND…SLLEGEGSSG (315 aa). The linker 1 stretch occupies residues 163–183; the sequence is YEKYGNSRQREPRDYSKYYQT. The segment at 184-275 is coil 1B; sequence IDDLKNQIFN…KNHEEEMRDL (92 aa). A linker 12 region spans residues 276–298; it reads QNVSTGDVNVEMNAAPGVDLTEL. Residues 299 to 437 form a coil 2 region; it reads LNNMRSQYEQ…QTYRSLLEGE (139 aa). The tract at residues 438-526 is tail; that stretch reads GSSGGGSYGG…GESSSKGPRY (89 aa). Residues 458-505 are compositionally biased toward gly residues; sequence GGGGYGGGSSSGGYGGGSSSGGGHGGSSGGSYGGGSSSGGGHGGGSSS. Residues 458 to 526 are disordered; it reads GGGGYGGGSS…GESSSKGPRY (69 aa). Positions 506–526 are enriched in low complexity; it reads GGHKSTTTGSVGESSSKGPRY.

Belongs to the intermediate filament family. In terms of assembly, heterotetramer of two type I and two type II keratins. Heterodimer with KRT1. Two heterodimers of KRT1 and KRT10 form a heterotetramer. The KRT10 subunit in the heterotetramer is probably disulfide-linked.

It is found in the secreted. The protein resides in the extracellular space. It localises to the cell surface. Its subcellular location is the cytoplasm. Its function is as follows. Plays a role in the establishment of the epidermal barrier on plantar skin. Involved in the maintenance of cell layer development and keratin filament bundles in suprabasal cells of the epithelium. This is Keratin, type I cytoskeletal 10 (KRT10) from Bos taurus (Bovine).